The following is a 139-amino-acid chain: Putative nickel-responsive regulator (139 aa).

Ni(2+)-binding residues include His-76, His-87, His-89, and Cys-95.

The protein belongs to the transcriptional regulatory CopG/NikR family. It depends on Ni(2+) as a cofactor.

Functionally, transcriptional regulator. This chain is Putative nickel-responsive regulator, found in Rhodopseudomonas palustris (strain HaA2).